Here is a 189-residue protein sequence, read N- to C-terminus: 5-hmdU DNA kinase (189 aa).

It belongs to the thymidylate kinase family. 5-hmdU DNA kinase subfamily.

It catalyses the reaction 5-hydroxymethyl-dUMP in DNA + ATP = 5-phosphomethyl-dUMP in DNA + ADP + H(+). Phosphorylates 5-hydroxymethyluracil (5hmdU) into 5-phosphomethyl-2'-deoxyuridine (5- PmdU) on DNA as a step in the pathway leading to thymidine hypermodifications in the viral genome. The phosphate is added internally to the DNA polymer. As a final result of the pathway of hypermodification, 5-AcNmdU substitutes for a subset of thymidines in the viral DNA. These modifications probably prevent degradation of viral genome by the host restriction-modification antiviral defense system. The sequence is that of 5-hmdU DNA kinase from Pseudomonas phage PaMx11.